The following is a 126-amino-acid chain: Probable 4-amino-4-deoxy-L-arabinose-phosphoundecaprenol flippase subunit ArnF (126 aa).

Over Met1–Tyr4 the chain is Cytoplasmic. The helical transmembrane segment at Ile5 to Val25 threads the bilayer. At Val26–Ser49 the chain is on the periplasmic side. A helical transmembrane segment spans residues Leu50–Thr70. Residues Leu71–Ala79 are Cytoplasmic-facing. A helical membrane pass occupies residues Tyr80 to Phe100. At Asn101–Glu102 the chain is on the periplasmic side. Residues Thr103–Ser123 traverse the membrane as a helical segment. The Cytoplasmic portion of the chain corresponds to Arg124–Glu126.

Belongs to the ArnF family. In terms of assembly, heterodimer of ArnE and ArnF.

Its subcellular location is the cell inner membrane. The protein operates within bacterial outer membrane biogenesis; lipopolysaccharide biosynthesis. In terms of biological role, translocates 4-amino-4-deoxy-L-arabinose-phosphoundecaprenol (alpha-L-Ara4N-phosphoundecaprenol) from the cytoplasmic to the periplasmic side of the inner membrane. This chain is Probable 4-amino-4-deoxy-L-arabinose-phosphoundecaprenol flippase subunit ArnF, found in Photorhabdus laumondii subsp. laumondii (strain DSM 15139 / CIP 105565 / TT01) (Photorhabdus luminescens subsp. laumondii).